Here is an 85-residue protein sequence, read N- to C-terminus: MMDETSTTETVAAAELRQFIERVERLEEEKAAIQGDIKDVMGEAKGRGYDTKAIRTIIRLRKKDANERIEEETILQTYMAALGME.

This sequence belongs to the UPF0335 family.

This is UPF0335 protein Atu3758 from Agrobacterium fabrum (strain C58 / ATCC 33970) (Agrobacterium tumefaciens (strain C58)).